The sequence spans 316 residues: Retron Ec73 putative ribosyltransferase/DNA-binding protein (316 aa).

Functionally, possible ribosyltransferase/DNA-binding component of antiviral defense system retron Ec73, composed of a non-coding RNA (ncRNA) followed by this protein then a reverse transcriptase (RT). Expression of this retron confers protection against bacteriophages SECphi4, SECphi6, SECphi27 and P1. At multiplicity of infection (MOI) of 0.02 cultures grow normally when infected with SECphi4 without collapsing, at MOI 2 cultures enter growth stasis. This chain is Retron Ec73 putative ribosyltransferase/DNA-binding protein, found in Escherichia coli.